We begin with the raw amino-acid sequence, 223 residues long: N-terminal Xaa-Pro-Lys N-methyltransferase 1 (223 aa).

Residue Met-1 is modified to N-acetylmethionine. Thr-2 carries the N-acetylthreonine; in N-terminal Xaa-Pro-Lys N-methyltransferase 1, N-terminally processed modification. S-adenosyl-L-methionine contacts are provided by residues Gly-69, Arg-74, 91–93 (DVT), 119–120 (LQ), and Gln-135.

It belongs to the methyltransferase superfamily. NTM1 family.

The protein resides in the nucleus. The catalysed reaction is N-terminal L-alanyl-L-prolyl-L-lysyl-[protein] + 3 S-adenosyl-L-methionine = N-terminal N,N,N-trimethyl-L-alanyl-L-prolyl-L-lysyl-[protein] + 3 S-adenosyl-L-homocysteine + 3 H(+). The enzyme catalyses N-terminal L-seryl-L-prolyl-L-lysyl-[protein] + 3 S-adenosyl-L-methionine = N-terminal N,N,N-trimethyl-L-seryl-L-prolyl-L-lysyl-[protein] + 3 S-adenosyl-L-homocysteine + 3 H(+). It catalyses the reaction N-terminal L-prolyl-L-prolyl-L-lysyl-[protein] + 2 S-adenosyl-L-methionine = N-terminal N,N-dimethyl-L-prolyl-L-prolyl-L-lysyl-[protein] + 2 S-adenosyl-L-homocysteine + 2 H(+). Its function is as follows. Distributive alpha-N-methyltransferase that methylates the N-terminus of target proteins containing the N-terminal motif [Ala/Gly/Pro/Ser]-Pro-Lys when the initiator Met is cleaved. Specifically catalyzes mono-, di- or tri-methylation of the exposed alpha-amino group of the Ala, Gly or Ser residue in the [Ala/Gly/Ser]-Pro-Lys motif and mono- or di-methylation of Pro in the Pro-Pro-Lys motif. Some of the substrates may be primed by NTMT2-mediated monomethylation. Catalyzes the trimethylation of the N-terminal Gly in CENPA (after removal of Met-1). Responsible for the N-terminal methylation of KLHL31, MYL2, MYL3, RB1, RCC1, RPL23A and SET. Required during mitosis for normal bipolar spindle formation and chromosome segregation via its action on RCC1. The sequence is that of N-terminal Xaa-Pro-Lys N-methyltransferase 1 (NTMT1) from Ailuropoda melanoleuca (Giant panda).